The sequence spans 23 residues: Phospholipase A2 crotoxin basic chain 3 (23 aa).

Ca(2+) is required as a cofactor. Contains 7 disulfide bonds. Expressed by the venom gland.

It is found in the secreted. It catalyses the reaction a 1,2-diacyl-sn-glycero-3-phosphocholine + H2O = a 1-acyl-sn-glycero-3-phosphocholine + a fatty acid + H(+). In terms of biological role, snake venom phospholipase A2 (PLA2) that shows presynaptic neurotoxicity. PLA2 catalyzes the calcium-dependent hydrolysis of the 2-acyl groups in 3-sn-phosphoglycerides. The protein is Phospholipase A2 crotoxin basic chain 3 of Crotalus durissus terrificus (South American rattlesnake).